We begin with the raw amino-acid sequence, 75 residues long: M-myrmeciitoxin-Mp2a (75 aa).

The signal sequence occupies residues 1 to 26 (MKLSCLLLTLAIIFVLTIVHAPNVEA). Positions 27-48 (KALADPESDAVGFADAVGEADP) are excised as a propeptide. The residue at position 74 (L74) is a Leucine amide.

Belongs to the formicidae venom precursor-01 superfamily. Ant pilosulin family. Heterodimer with M-MIITX-Mp2b (pilosin-3b) (AC P0C023); disulfide-linked. Only heterodimers (and not monomers) have been identified in the venom. Expressed by the venom gland.

Its subcellular location is the secreted. Its function is as follows. Heterodimer protein that may serve both defensive (pain-inducing) and predatory (insecticidal) roles. Has membrane-disrupting activity and shows induction of non-specific calcium influx into cells,. Shows broad-spectrum activity against a diverse range of bacteria, and cell lines, as well as hemolytic activity (EC(50)=2.18 uM). In vivo, shows moderate insecticidal activity against D.melanogaster and potent anthelmintic activity against the veterinary nematode H.contortus. In addition, intraplantar injection into mice induces nocifensive behavior and mechanical allodynia. The protein is M-myrmeciitoxin-Mp2a of Myrmecia pilosula (Jack jumper ant).